The chain runs to 207 residues: ATP phosphoribosyltransferase (207 aa).

The protein belongs to the ATP phosphoribosyltransferase family. Short subfamily. In terms of assembly, heteromultimer composed of HisG and HisZ subunits.

Its subcellular location is the cytoplasm. It carries out the reaction 1-(5-phospho-beta-D-ribosyl)-ATP + diphosphate = 5-phospho-alpha-D-ribose 1-diphosphate + ATP. It functions in the pathway amino-acid biosynthesis; L-histidine biosynthesis; L-histidine from 5-phospho-alpha-D-ribose 1-diphosphate: step 1/9. Functionally, catalyzes the condensation of ATP and 5-phosphoribose 1-diphosphate to form N'-(5'-phosphoribosyl)-ATP (PR-ATP). Has a crucial role in the pathway because the rate of histidine biosynthesis seems to be controlled primarily by regulation of HisG enzymatic activity. The protein is ATP phosphoribosyltransferase (hisG) of Dictyoglomus turgidum (strain DSM 6724 / Z-1310).